Here is a 329-residue protein sequence, read N- to C-terminus: Phospho-N-acetylmuramoyl-pentapeptide-transferase (329 aa).

The next 9 membrane-spanning stretches (helical) occupy residues 1–21, 53–73, 76–96, 109–129, 141–161, 175–195, 198–218, 237–257, and 309–329; these read MLLNGIVAAVITMIITIIGIP, MGGFVFVVVSLVVSLVAALVF, FSPAFITAWWVFAMYAVIGFL, GLTAKQKMLAQILIGIVSYFI, ILSWQVNIGIFFSIFIIIWLV, GLASITVAISLTAYAVIAVVH, YDVLLIILSVIGGLLGFFVFN, FLAIVSILLHAEWTLLLIGAV, and IVFWLFTAVLSVIALCIYFAF.

It belongs to the glycosyltransferase 4 family. MraY subfamily. It depends on Mg(2+) as a cofactor.

It is found in the cell membrane. The enzyme catalyses UDP-N-acetyl-alpha-D-muramoyl-L-alanyl-gamma-D-glutamyl-L-lysyl-D-alanyl-D-alanine + di-trans,octa-cis-undecaprenyl phosphate = Mur2Ac(oyl-L-Ala-gamma-D-Glu-L-Lys-D-Ala-D-Ala)-di-trans,octa-cis-undecaprenyl diphosphate + UMP. It functions in the pathway cell wall biogenesis; peptidoglycan biosynthesis. Functionally, catalyzes the initial step of the lipid cycle reactions in the biosynthesis of the cell wall peptidoglycan: transfers peptidoglycan precursor phospho-MurNAc-pentapeptide from UDP-MurNAc-pentapeptide onto the lipid carrier undecaprenyl phosphate, yielding undecaprenyl-pyrophosphoryl-MurNAc-pentapeptide, known as lipid I. The polypeptide is Phospho-N-acetylmuramoyl-pentapeptide-transferase (Lactococcus lactis subsp. cremoris (strain SK11)).